The primary structure comprises 505 residues: Succinyl-CoA:acetate CoA-transferase (505 aa).

A CoA-binding site is contributed by Gly-269–Val-273. The active-site 5-glutamyl coenzyme A thioester intermediate is Glu-294. Residues Ile-364, Asn-384, Gly-388, and Lys-408 each coordinate CoA.

It belongs to the acetyl-CoA hydrolase/transferase family. Homodimer.

The enzyme catalyses succinyl-CoA + acetate = succinate + acetyl-CoA. It functions in the pathway metabolic intermediate biosynthesis; acetyl-CoA biosynthesis. Its activity is regulated as follows. Subject to competitive inhibition by coenzyme A (CoA). Functionally, utilizes succinyl-CoA to convert toxic acetate to acetyl-CoA and succinate. Required for growth on acetic acid and for resistance to high levels of acetic acid. Also has low activity with acetoacetate as substrate. This is Succinyl-CoA:acetate CoA-transferase from Acetobacter aceti.